We begin with the raw amino-acid sequence, 754 residues long: Polyribonucleotide nucleotidyltransferase (754 aa).

Residues Asp525 and Asp531 each contribute to the Mg(2+) site. The 60-residue stretch at 591–650 folds into the KH domain; that stretch reads PRITTIKVPVDKIGEVIGPKGKMINSITEETGASISIEDDGTVFVGASNGEAAQAAIDKI. Residues 662–731 form the S1 motif domain; it reads GERFLGTVVK…NRGKISLVLV (70 aa).

Belongs to the polyribonucleotide nucleotidyltransferase family. Requires Mg(2+) as cofactor.

Its subcellular location is the cytoplasm. The enzyme catalyses RNA(n+1) + phosphate = RNA(n) + a ribonucleoside 5'-diphosphate. In terms of biological role, involved in mRNA degradation. Catalyzes the phosphorolysis of single-stranded polyribonucleotides processively in the 3'- to 5'-direction. The sequence is that of Polyribonucleotide nucleotidyltransferase from Mycolicibacterium vanbaalenii (strain DSM 7251 / JCM 13017 / BCRC 16820 / KCTC 9966 / NRRL B-24157 / PYR-1) (Mycobacterium vanbaalenii).